Here is an 85-residue protein sequence, read N- to C-terminus: Cell division topological specificity factor (85 aa).

It belongs to the MinE family.

Prevents the cell division inhibition by proteins MinC and MinD at internal division sites while permitting inhibition at polar sites. This ensures cell division at the proper site by restricting the formation of a division septum at the midpoint of the long axis of the cell. The polypeptide is Cell division topological specificity factor (Xanthomonas campestris pv. campestris (strain 8004)).